The sequence spans 531 residues: Peptide chain release factor 3 (531 aa).

Positions 10–278 (RRRRTFAIIS…SLIDWAPAPK (269 aa)) constitute a tr-type G domain. Residues 19 to 26 (SHPDAGKT), 87 to 91 (DTPGH), and 141 to 144 (NKYD) each bind GTP.

Belongs to the TRAFAC class translation factor GTPase superfamily. Classic translation factor GTPase family. PrfC subfamily.

Its subcellular location is the cytoplasm. Increases the formation of ribosomal termination complexes and stimulates activities of RF-1 and RF-2. It binds guanine nucleotides and has strong preference for UGA stop codons. It may interact directly with the ribosome. The stimulation of RF-1 and RF-2 is significantly reduced by GTP and GDP, but not by GMP. The protein is Peptide chain release factor 3 of Neisseria meningitidis serogroup C / serotype 2a (strain ATCC 700532 / DSM 15464 / FAM18).